Reading from the N-terminus, the 420-residue chain is Exodeoxyribonuclease 7 large subunit (420 aa).

Belongs to the XseA family. In terms of assembly, heterooligomer composed of large and small subunits.

The protein localises to the cytoplasm. It catalyses the reaction Exonucleolytic cleavage in either 5'- to 3'- or 3'- to 5'-direction to yield nucleoside 5'-phosphates.. In terms of biological role, bidirectionally degrades single-stranded DNA into large acid-insoluble oligonucleotides, which are then degraded further into small acid-soluble oligonucleotides. This Helicobacter pylori (strain P12) protein is Exodeoxyribonuclease 7 large subunit.